An 828-amino-acid polypeptide reads, in one-letter code: Glycerol-3-phosphate acyltransferase (828 aa).

The HXXXXD motif signature appears at 309–314 (CHRSHI).

The protein belongs to the GPAT/DAPAT family.

It localises to the cell inner membrane. It catalyses the reaction sn-glycerol 3-phosphate + an acyl-CoA = a 1-acyl-sn-glycero-3-phosphate + CoA. It functions in the pathway phospholipid metabolism; CDP-diacylglycerol biosynthesis; CDP-diacylglycerol from sn-glycerol 3-phosphate: step 1/3. The chain is Glycerol-3-phosphate acyltransferase from Pseudomonas putida (strain GB-1).